The sequence spans 249 residues: Ubiquinone/menaquinone biosynthesis C-methyltransferase UbiE (249 aa).

S-adenosyl-L-methionine-binding positions include threonine 72, aspartate 93, and 121-122 (DA).

The protein belongs to the class I-like SAM-binding methyltransferase superfamily. MenG/UbiE family.

It catalyses the reaction a 2-demethylmenaquinol + S-adenosyl-L-methionine = a menaquinol + S-adenosyl-L-homocysteine + H(+). The catalysed reaction is a 2-methoxy-6-(all-trans-polyprenyl)benzene-1,4-diol + S-adenosyl-L-methionine = a 5-methoxy-2-methyl-3-(all-trans-polyprenyl)benzene-1,4-diol + S-adenosyl-L-homocysteine + H(+). The protein operates within quinol/quinone metabolism; menaquinone biosynthesis; menaquinol from 1,4-dihydroxy-2-naphthoate: step 2/2. Its pathway is cofactor biosynthesis; ubiquinone biosynthesis. Functionally, methyltransferase required for the conversion of demethylmenaquinol (DMKH2) to menaquinol (MKH2) and the conversion of 2-polyprenyl-6-methoxy-1,4-benzoquinol (DDMQH2) to 2-polyprenyl-3-methyl-6-methoxy-1,4-benzoquinol (DMQH2). In Teredinibacter turnerae (strain ATCC 39867 / T7901), this protein is Ubiquinone/menaquinone biosynthesis C-methyltransferase UbiE.